The sequence spans 208 residues: Large ribosomal subunit protein uL3 (208 aa).

Gln-149 carries the post-translational modification N5-methylglutamine.

The protein belongs to the universal ribosomal protein uL3 family. As to quaternary structure, part of the 50S ribosomal subunit. Forms a cluster with proteins L14 and L19. In terms of processing, methylated by PrmB.

Its function is as follows. One of the primary rRNA binding proteins, it binds directly near the 3'-end of the 23S rRNA, where it nucleates assembly of the 50S subunit. This Actinobacillus pleuropneumoniae serotype 5b (strain L20) protein is Large ribosomal subunit protein uL3.